Consider the following 160-residue polypeptide: DNA topoisomerase small subunit (160 aa).

Part of the DNA topoisomerase complex made of gp39, gp52 and gp60. Requires Mg(2+) as cofactor.

It carries out the reaction ATP-dependent breakage, passage and rejoining of double-stranded DNA.. Small subunit of the DNA topoisomerase that untwists superhelical DNA. Controls topological states of double-stranded DNA by transient breakage and subsequent rejoining of DNA strands. The chain is DNA topoisomerase small subunit (60) from Enterobacteria phage T4 (Bacteriophage T4).